Here is a 64-residue protein sequence, read N- to C-terminus: Large ribosomal subunit protein bL28 (64 aa).

It belongs to the bacterial ribosomal protein bL28 family.

This chain is Large ribosomal subunit protein bL28 (rpmB), found in Mycobacterium leprae (strain TN).